A 226-amino-acid chain; its full sequence is Cytidylate kinase (226 aa).

12–20 (GPSGAGKGT) serves as a coordination point for ATP.

This sequence belongs to the cytidylate kinase family. Type 1 subfamily.

The protein resides in the cytoplasm. It carries out the reaction CMP + ATP = CDP + ADP. It catalyses the reaction dCMP + ATP = dCDP + ADP. In Vibrio parahaemolyticus serotype O3:K6 (strain RIMD 2210633), this protein is Cytidylate kinase.